The following is a 365-amino-acid chain: Flagellar P-ring protein (365 aa).

The signal sequence occupies residues 1–19 (MIKFLSALILLLVTTAAQA).

Belongs to the FlgI family. As to quaternary structure, the basal body constitutes a major portion of the flagellar organelle and consists of four rings (L,P,S, and M) mounted on a central rod.

It is found in the periplasm. It localises to the bacterial flagellum basal body. Its function is as follows. Assembles around the rod to form the L-ring and probably protects the motor/basal body from shearing forces during rotation. This chain is Flagellar P-ring protein, found in Shigella flexneri serotype 5b (strain 8401).